The primary structure comprises 360 residues: Phospho-N-acetylmuramoyl-pentapeptide-transferase (360 aa).

Helical transmembrane passes span 25-45, 73-93, 97-117, 128-148, 168-188, 199-219, 236-256, 262-282, 288-308, and 338-358; these read RAILSVLTALVLSLWLGPTLI, TMGGVLILAAVLGSSLLWADL, YVWVVLLVTTGFGIVGFVDDY, LIAKWKYFWQSVIASVAAVYL, VMPQLGMLYMLMAYFVIVGTS, GLAIMPTIMVAAALGIFAYVS, TAELLVVCTAIVGAGLGFLWF, LVFMGDVGSLALGAALGIIAI, LVLFIMGGVFVMETLSVMLQV, and VIVRFWILSLIFVLIGLATLK.

This sequence belongs to the glycosyltransferase 4 family. MraY subfamily. Mg(2+) is required as a cofactor.

The protein resides in the cell inner membrane. It catalyses the reaction UDP-N-acetyl-alpha-D-muramoyl-L-alanyl-gamma-D-glutamyl-meso-2,6-diaminopimeloyl-D-alanyl-D-alanine + di-trans,octa-cis-undecaprenyl phosphate = di-trans,octa-cis-undecaprenyl diphospho-N-acetyl-alpha-D-muramoyl-L-alanyl-D-glutamyl-meso-2,6-diaminopimeloyl-D-alanyl-D-alanine + UMP. It participates in cell wall biogenesis; peptidoglycan biosynthesis. Functionally, catalyzes the initial step of the lipid cycle reactions in the biosynthesis of the cell wall peptidoglycan: transfers peptidoglycan precursor phospho-MurNAc-pentapeptide from UDP-MurNAc-pentapeptide onto the lipid carrier undecaprenyl phosphate, yielding undecaprenyl-pyrophosphoryl-MurNAc-pentapeptide, known as lipid I. The polypeptide is Phospho-N-acetylmuramoyl-pentapeptide-transferase (Idiomarina loihiensis (strain ATCC BAA-735 / DSM 15497 / L2-TR)).